The chain runs to 199 residues: Oligoribonuclease (199 aa).

Residues 5–170 enclose the Exonuclease domain; the sequence is LVWIDCEMTG…ADIRESIREL (166 aa). Y127 is a catalytic residue.

The protein belongs to the oligoribonuclease family.

Its subcellular location is the cytoplasm. Its function is as follows. 3'-to-5' exoribonuclease specific for small oligoribonucleotides. The protein is Oligoribonuclease of Rhodococcus jostii (strain RHA1).